Consider the following 729-residue polypeptide: MLYQSETLQLHWLENGIAELVFDAPGSVNKLDTKTVANLGEALNVLEKQSELKGLLLRSAKTALIVGADITEFLSLFNAPPEKLHQWLVFANTIFNRLEDLPVPTISAINGYALGGGCECILATDFRIASPEARIGLPETKLGIMPGFGGSVRLPRLLGADSALEIIATGKDVTANDALKIGLVDAVVDPEKLVGSALTMLKQAIDGKLDWQAARRPKLEPLKLNPTEAAMCFTIAKGRVMQVAGKHYPAPLTAVKTIEAAAKFGRTEALNLETNSFVPLAGSNEARALVGIFLNDQYVKAQAKKLSKGVAAPKLAAVLGAGIMGGGIAYQSALKSVPVIMKDINENSLDLGMNEAAKLLNKQLERGKVDGLKMASILATIRPTLDYAGIERAQVIVEAVVENPKVKAAVLAEVEALIGEDTVLASNTSTIPIDQLAKSLKRPENFCGMHFFNPVHRMPLVEIIRGAKTSDKTLAAVVAYATQMGKTPIVVNDCPGFFVNRVLFPYLAGFGMLVRDGGDFHQIDKVMEKQFGWPMGPAYLLDVVGIDTAHHAQAVMAAGFPERMNKDYRDAVDVMFDNQRFGQKNGQGFYRYTQDAKGKPRKENDEQVDKLLAEISQPLQEFSDEDIIARTMIPMINEVVRCLEEGIIASAAEGDMALVYGLGFPPFHGGVFRYLDTLGSANYVEMAQRYAHLGALYHVPAGLRAKAEHNESYYPVAAALLDVSTNQPA.

The interval 1-189 (MLYQSETLQL…KIGLVDAVVD (189 aa)) is enoyl-CoA hydratase/isomerase. Asp296 is a binding site for substrate. The segment at 311–729 (AAPKLAAVLG…LLDVSTNQPA (419 aa)) is 3-hydroxyacyl-CoA dehydrogenase. NAD(+) is bound by residues Met324, Asp343, 400 to 402 (VVE), Lys407, and Ser429. His450 (for 3-hydroxyacyl-CoA dehydrogenase activity) is an active-site residue. NAD(+) is bound at residue Asn453. The substrate site is built by Asn500 and Tyr660.

It in the N-terminal section; belongs to the enoyl-CoA hydratase/isomerase family. The protein in the C-terminal section; belongs to the 3-hydroxyacyl-CoA dehydrogenase family. As to quaternary structure, heterotetramer of two alpha chains (FadB) and two beta chains (FadA).

It carries out the reaction a (3S)-3-hydroxyacyl-CoA + NAD(+) = a 3-oxoacyl-CoA + NADH + H(+). The catalysed reaction is a (3S)-3-hydroxyacyl-CoA = a (2E)-enoyl-CoA + H2O. It catalyses the reaction a 4-saturated-(3S)-3-hydroxyacyl-CoA = a (3E)-enoyl-CoA + H2O. The enzyme catalyses (3S)-3-hydroxybutanoyl-CoA = (3R)-3-hydroxybutanoyl-CoA. It carries out the reaction a (3Z)-enoyl-CoA = a 4-saturated (2E)-enoyl-CoA. The catalysed reaction is a (3E)-enoyl-CoA = a 4-saturated (2E)-enoyl-CoA. The protein operates within lipid metabolism; fatty acid beta-oxidation. Functionally, involved in the aerobic and anaerobic degradation of long-chain fatty acids via beta-oxidation cycle. Catalyzes the formation of 3-oxoacyl-CoA from enoyl-CoA via L-3-hydroxyacyl-CoA. It can also use D-3-hydroxyacyl-CoA and cis-3-enoyl-CoA as substrate. This is Fatty acid oxidation complex subunit alpha from Yersinia pestis bv. Antiqua (strain Antiqua).